The chain runs to 343 residues: Sorbitol dehydrogenase (343 aa).

Positions 1–26 (MKALVKTQHGTGHFAVQEKPEPTPGK) are disordered. 3 residues coordinate Zn(2+): C39, H60, and E61. E146 serves as a coordination point for substrate. Residues I174, R200, and 262-264 (VGL) each bind NAD(+).

It belongs to the zinc-containing alcohol dehydrogenase family. In terms of assembly, homotetramer. The cofactor is Zn(2+).

It catalyses the reaction keto-D-fructose + NADH + H(+) = D-sorbitol + NAD(+). It carries out the reaction xylitol + NAD(+) = D-xylulose + NADH + H(+). The enzyme catalyses L-iditol + NAD(+) = keto-L-sorbose + NADH + H(+). Its function is as follows. Polyol dehydrogenase that catalyzes the NAD(+)-dependent oxidation of various sugar alcohols. Is active with D-sorbitol (D-glucitol), xylitol and L-iditol as substrates, leading to the C2-oxidized products D-fructose, D-xylulose and L-sorbose, respectively. This chain is Sorbitol dehydrogenase (gutB), found in Halalkalibacterium halodurans (strain ATCC BAA-125 / DSM 18197 / FERM 7344 / JCM 9153 / C-125) (Bacillus halodurans).